The primary structure comprises 507 residues: MVTIRADEISNIIRERIEQYNREVTIVNTGTVLQVGDGIARIYGLDEVMAGELVEFEEGTIGIALNLESNNVGVVLMGDGLMIQEGSSVKATGKIAQIPVSEAYLGRVINALANPIDGRGKISASESRLIESPAPGIISRRSVYEPLQTGLIAIDSMIPIGRGQRELIIGDRQTGKTAVATDTILNQQGQNVICVYVAIGQKASSVAQVVTGLQERGAMEYTIVVAETADAPAALQYLAPYTGAALAEYFMYREQHTLIIYDDLSKQAQAYRQMSLLLRRPPGREAYPGDVFYLHSRLLERAAKLSSQLGEGSMTALPIVETQSGDVSAYIPTNVISITDGQIFLSADLFNAGIRPAINVGISVSRVGSAAQIKAMKQVAGKLKLELAQFAELEAFAQFSSDLDKATQNQLARGQRLRELLKQSQSAPLTVEEQVMTIYTGTNGYLDGLEIGQVRKFLVQLRTYLKTNKPQFQEIISSTKTLTAEAESVLKEGIQEQLERFLLQEKL.

Residue 170 to 177 coordinates ATP; it reads GDRQTGKT. The residue at position 257 (Thr-257) is a Phosphothreonine.

It belongs to the ATPase alpha/beta chains family. As to quaternary structure, F-type ATPases have 2 components, CF(1) - the catalytic core - and CF(0) - the membrane proton channel. CF(1) has five subunits: alpha(3), beta(3), gamma(1), delta(1), epsilon(1). CF(0) has four main subunits: a, b, b' and c.

It localises to the plastid. It is found in the chloroplast thylakoid membrane. It catalyses the reaction ATP + H2O + 4 H(+)(in) = ADP + phosphate + 5 H(+)(out). Functionally, produces ATP from ADP in the presence of a proton gradient across the membrane. The alpha chain is a regulatory subunit. The sequence is that of ATP synthase subunit alpha, chloroplastic from Barbarea verna (Land cress).